A 37-amino-acid polypeptide reads, in one-letter code: Large ribosomal subunit protein bL36c (37 aa).

Belongs to the bacterial ribosomal protein bL36 family.

It is found in the plastid. The protein resides in the chloroplast. The polypeptide is Large ribosomal subunit protein bL36c (Tupiella akineta (Green alga)).